The primary structure comprises 2492 residues: Polyketide synthase 19 (2492 aa).

The Ketosynthase family 3 (KS3) domain maps to 12–463 (REPIAIVGTS…GTNAHAIVES (452 aa)). Active-site for beta-ketoacyl synthase activity residues include Cys202, His341, and His383. A malonyl-CoA:ACP transacylase (MAT) domain region spans residues 571–866 (VFTGQGAQWA…LEVGPHPALK (296 aa)). The N-terminal hotdog fold stretch occupies residues 967 to 1110 (HELLGRSVSH…GRIRLWLEQP (144 aa)). The segment at 967 to 1270 (HELLGRSVSH…GVQMTAIGKP (304 aa)) is dehydratase (DH) domain. Residues 967–1273 (HELLGRSVSH…MTAIGKPPDR (307 aa)) enclose the PKS/mFAS DH domain. His1001 serves as the catalytic Proton acceptor; for dehydratase activity. A C-terminal hotdog fold region spans residues 1125-1273 (MSELNMAQVY…MTAIGKPPDR (149 aa)). Asp1183 acts as the Proton donor; for dehydratase activity in catalysis. The C-methyltransferase (CMeT) domain stretch occupies residues 1431-1604 (LGAIVKQLGH…KTTGFSGVDI (174 aa)). The interval 2118–2293 (SYLLFGMTGD…AGSIVHISVL (176 aa)) is ketoreductase (KR) domain. The Carrier domain occupies 2404-2479 (PILEKRFAQA…RVCDDVLVDW (76 aa)). The residue at position 2438 (Ser2438) is an O-(pantetheine 4'-phosphoryl)serine.

Highly reducing polyketide synthase; part of the gene cluster that mediates the biosynthesis of fujikurins A-D, secondary metabolites playing a role during rice infection. The polyketide synthase PKS19 acts with the trans-enoyl reductase FFUJ_12240 and the polyketide transferase FFUJ_12241 to produce fujikurins, however, the biosynthesis pathway has not been identified yet. The chain is Polyketide synthase 19 from Gibberella fujikuroi (strain CBS 195.34 / IMI 58289 / NRRL A-6831) (Bakanae and foot rot disease fungus).